The following is a 586-amino-acid chain: Clathrin heavy chain linker domain-containing protein 1 (586 aa).

Residues 174 to 232 (MNLDALTKYMKHLEDKYAEIKQAMLIKYVPAQRKADLDEEMIVLLKRRDVAENLNKKLQ) are a coiled coil.

The polypeptide is Clathrin heavy chain linker domain-containing protein 1 (CLHC1) (Homo sapiens (Human)).